Consider the following 307-residue polypeptide: Probable transposase for transposon Tn903 (307 aa).

Required for transposition of transposon Tn903. The protein is Probable transposase for transposon Tn903 of Escherichia coli.